The sequence spans 1706 residues: Histone acetyltransferase HAC12 (1706 aa).

Disordered regions lie at residues 1 to 33 (MNVQAHMSGQRSGQVPNQGTVPQNNGNSQMQNL), 251 to 284 (TNNNSGGFSAEPTIVPQSQQQQQRQHTGGQNSHM), 397 to 456 (VSRV…LGKT), and 524 to 543 (QNSQQIQQMMHPQNIGSDSS). The segment covering 397–406 (VSRVNSSLSH) has biased composition (polar residues). Low complexity predominate over residues 407–434 (QQQFQQPPNRFQQQPNQIQQQQQQFLNQ). The TAZ-type 1 zinc finger occupies 637–716 (HDPKFKNQQR…DPRCPVCVPV (80 aa)). Residues 791–909 (TESCKSSIVS…PELTSKSRKP (119 aa)) are disordered. Positions 794-805 (CKSSIVSTTEAD) are enriched in polar residues. Composition is skewed to basic and acidic residues over residues 809–829 (DAERKDHRPLKSETMEVKVEI) and 870–896 (PKQENIKMKKEPGWPKKEPGCPKKEEL). A PHD-type zinc finger spans residues 998–1075 (HYFCIPCYNE…EYTCPYCYVI (78 aa)). One can recognise a CBP/p300-type HAT domain in the interval 1090–1526 (VLGAKDLPRT…VLYHLHNPTA (437 aa)). Residues 1213 to 1215 (LDS), 1232 to 1233 (RT), and Trp1288 each bind acetyl-CoA. 2 ZZ-type zinc fingers span residues 1408-1471 (HLQH…IADI) and 1528-1581 (AFVT…SLAD). Positions 1413, 1416, 1428, 1431, 1437, 1440, 1453, 1461, 1533, 1536, 1548, 1551, 1557, 1560, 1569, and 1571 each coordinate Zn(2+). The TAZ-type 2 zinc-finger motif lies at 1588–1671 (EARQLRVLQL…ECDVPRCGDL (84 aa)).

It is found in the nucleus. The enzyme catalyses L-lysyl-[protein] + acetyl-CoA = N(6)-acetyl-L-lysyl-[protein] + CoA + H(+). In terms of biological role, acetyltransferase enzyme. Acetylates histones, giving a specific tag for transcriptional activation. The sequence is that of Histone acetyltransferase HAC12 (HAC12) from Arabidopsis thaliana (Mouse-ear cress).